The sequence spans 403 residues: Argininosuccinate synthase (403 aa).

Residues 12-20 (AYSGGLDTS) and Ala-39 contribute to the ATP site. L-citrulline contacts are provided by Tyr-90 and Ser-95. Residue Gly-120 coordinates ATP. Positions 122, 126, and 127 each coordinate L-aspartate. Asn-126 serves as a coordination point for L-citrulline. Positions 130, 182, 191, 267, and 279 each coordinate L-citrulline.

It belongs to the argininosuccinate synthase family. Type 1 subfamily. In terms of assembly, homotetramer.

It localises to the cytoplasm. It carries out the reaction L-citrulline + L-aspartate + ATP = 2-(N(omega)-L-arginino)succinate + AMP + diphosphate + H(+). It functions in the pathway amino-acid biosynthesis; L-arginine biosynthesis; L-arginine from L-ornithine and carbamoyl phosphate: step 2/3. This chain is Argininosuccinate synthase, found in Vesicomyosocius okutanii subsp. Calyptogena okutanii (strain HA).